Reading from the N-terminus, the 67-residue chain is Beta-defensin 123 (67 aa).

A signal peptide spans 1-20 (MKLLLLTLTVLLLLSQLTPG). Cystine bridges form between C25–C52, C32–C46, and C36–C53.

It belongs to the beta-defensin family.

The protein localises to the secreted. Functionally, has antibacterial activity. In Pongo pygmaeus (Bornean orangutan), this protein is Beta-defensin 123 (DEFB123).